We begin with the raw amino-acid sequence, 331 residues long: tRNA N6-adenosine threonylcarbamoyltransferase (331 aa).

Residues H109, H113, and Y130 each contribute to the Fe cation site. Substrate-binding positions include 130-134 (YLSGG), D162, D183, and S262. Residue D290 coordinates Fe cation.

It belongs to the KAE1 / TsaD family. Requires Fe(2+) as cofactor.

It is found in the cytoplasm. The catalysed reaction is L-threonylcarbamoyladenylate + adenosine(37) in tRNA = N(6)-L-threonylcarbamoyladenosine(37) in tRNA + AMP + H(+). Required for the formation of a threonylcarbamoyl group on adenosine at position 37 (t(6)A37) in tRNAs that read codons beginning with adenine. Is probably involved in the transfer of the threonylcarbamoyl moiety of threonylcarbamoyl-AMP (TC-AMP) to the N6 group of A37. The chain is tRNA N6-adenosine threonylcarbamoyltransferase from Metallosphaera sedula (strain ATCC 51363 / DSM 5348 / JCM 9185 / NBRC 15509 / TH2).